We begin with the raw amino-acid sequence, 549 residues long: Ankyrin repeat domain-containing protein SOWAHA (549 aa).

Positions 1 to 17 are cleaved as a signal peptide; that stretch reads MALAAAAAAAAAGVSQA. 2 disordered regions span residues 82–219 and 235–256; these read KPRP…PCML and EEPG…PLLL. The segment covering 203-216 has biased composition (low complexity); sequence PGPGAAKGPPQQKP. The segment covering 235–248 has biased composition (basic and acidic residues); the sequence is EEPGLRRQLSEEPS. Residue S260 is modified to Phosphoserine. 2 ANK repeats span residues 345-374 and 384-414; these read SGFT…RSGA and GGYT…QVHV. Positions 513 to 549 are disordered; that stretch reads PRKKTKIRGGLPAFSEISRRPTPGPLAGLVPSLPPTT.

The protein belongs to the SOWAH family.

The sequence is that of Ankyrin repeat domain-containing protein SOWAHA (SOWAHA) from Homo sapiens (Human).